The sequence spans 377 residues: Chaperone protein DnaJ (377 aa).

The J domain maps to 3 to 67; it reads DYYDLLGVGR…QTRARYDQFG (65 aa). The segment at 133-215 adopts a CR-type zinc-finger fold; the sequence is GQEQEIKIPH…CGGQGVRQVR (83 aa). Zn(2+) is bound by residues Cys-146, Cys-149, Cys-163, Cys-166, Cys-189, Cys-192, Cys-203, and Cys-206. 4 CXXCXGXG motif repeats span residues 146-153, 163-170, 189-196, and 203-210; these read CDTCGGSG, CGTCGGAG, CPNCGGTG, and CNACGGQG.

Belongs to the DnaJ family. In terms of assembly, homodimer. Zn(2+) serves as cofactor.

It is found in the cytoplasm. In terms of biological role, participates actively in the response to hyperosmotic and heat shock by preventing the aggregation of stress-denatured proteins and by disaggregating proteins, also in an autonomous, DnaK-independent fashion. Unfolded proteins bind initially to DnaJ; upon interaction with the DnaJ-bound protein, DnaK hydrolyzes its bound ATP, resulting in the formation of a stable complex. GrpE releases ADP from DnaK; ATP binding to DnaK triggers the release of the substrate protein, thus completing the reaction cycle. Several rounds of ATP-dependent interactions between DnaJ, DnaK and GrpE are required for fully efficient folding. Also involved, together with DnaK and GrpE, in the DNA replication of plasmids through activation of initiation proteins. This chain is Chaperone protein DnaJ, found in Parasynechococcus marenigrum (strain WH8102).